A 428-amino-acid polypeptide reads, in one-letter code: Adenylosuccinate synthetase (428 aa).

GTP is bound by residues 12-18 (GDEGKGK) and 40-42 (GHT). Aspartate 13 (proton acceptor) is an active-site residue. Mg(2+)-binding residues include aspartate 13 and glycine 40. Residues 13–16 (DEGK), 38–41 (NAGH), threonine 129, arginine 143, glutamine 224, threonine 239, and arginine 303 each bind IMP. Catalysis depends on histidine 41, which acts as the Proton donor. 299 to 305 (VTTGRSR) provides a ligand contact to substrate. GTP contacts are provided by residues arginine 305, 331-333 (KLD), and 413-415 (GVG).

The protein belongs to the adenylosuccinate synthetase family. As to quaternary structure, homodimer. Requires Mg(2+) as cofactor.

Its subcellular location is the cytoplasm. It carries out the reaction IMP + L-aspartate + GTP = N(6)-(1,2-dicarboxyethyl)-AMP + GDP + phosphate + 2 H(+). It functions in the pathway purine metabolism; AMP biosynthesis via de novo pathway; AMP from IMP: step 1/2. Its function is as follows. Plays an important role in the de novo pathway of purine nucleotide biosynthesis. Catalyzes the first committed step in the biosynthesis of AMP from IMP. The chain is Adenylosuccinate synthetase from Saccharopolyspora erythraea (strain ATCC 11635 / DSM 40517 / JCM 4748 / NBRC 13426 / NCIMB 8594 / NRRL 2338).